Consider the following 429-residue polypeptide: Adenylosuccinate synthetase (429 aa).

GTP-binding positions include 12–18 (GDEGKGK) and 40–42 (GHT). D13 acts as the Proton acceptor in catalysis. Positions 13 and 40 each coordinate Mg(2+). Residues 13-16 (DEGK), 38-41 (NAGH), T128, R142, Q223, and R302 each bind IMP. H41 (proton donor) is an active-site residue. 298 to 304 (TVTGRPR) lines the substrate pocket. Residues R304, 330-332 (LLD), and 412-414 (SVG) each bind GTP.

Belongs to the adenylosuccinate synthetase family. In terms of assembly, homodimer. Requires Mg(2+) as cofactor.

Its subcellular location is the cytoplasm. It catalyses the reaction IMP + L-aspartate + GTP = N(6)-(1,2-dicarboxyethyl)-AMP + GDP + phosphate + 2 H(+). It functions in the pathway purine metabolism; AMP biosynthesis via de novo pathway; AMP from IMP: step 1/2. Functionally, plays an important role in the de novo pathway of purine nucleotide biosynthesis. Catalyzes the first committed step in the biosynthesis of AMP from IMP. This is Adenylosuccinate synthetase from Lactobacillus delbrueckii subsp. bulgaricus (strain ATCC 11842 / DSM 20081 / BCRC 10696 / JCM 1002 / NBRC 13953 / NCIMB 11778 / NCTC 12712 / WDCM 00102 / Lb 14).